A 745-amino-acid polypeptide reads, in one-letter code: Jacalin-related lectin 4 (745 aa).

Jacalin-type lectin domains are found at residues 2 to 148 (AQKL…YFAP), 151 to 294 (PTKF…YFSP), 307 to 448 (AEKL…YFVT), 451 to 594 (PTKF…YFSR), and 601 to 744 (AETL…YVMP).

This sequence belongs to the jacalin lectin family.

In Arabidopsis thaliana (Mouse-ear cress), this protein is Jacalin-related lectin 4 (JAL4).